The following is a 132-amino-acid chain: UPF0102 protein Ajs_0414 (132 aa).

A disordered region spans residues 1 to 23 (MGFLGKKVNGSAPARTTRAAGQA).

Belongs to the UPF0102 family.

The sequence is that of UPF0102 protein Ajs_0414 from Acidovorax sp. (strain JS42).